We begin with the raw amino-acid sequence, 508 residues long: GMP synthase [glutamine-hydrolyzing] (508 aa).

One can recognise a Glutamine amidotransferase type-1 domain in the interval 1-189 (MILVLDFGSQ…ALLVCGCEKT (189 aa)). The active-site Nucleophile is the C78. Catalysis depends on residues H163 and E165. Positions 190-383 (WGMQHFAQRE…LGVSQDFLMR (194 aa)) constitute a GMPS ATP-PPase domain. Residue 217-223 (SGGVDST) participates in ATP binding.

Homodimer.

The enzyme catalyses XMP + L-glutamine + ATP + H2O = GMP + L-glutamate + AMP + diphosphate + 2 H(+). It participates in purine metabolism; GMP biosynthesis; GMP from XMP (L-Gln route): step 1/1. Catalyzes the synthesis of GMP from XMP. The protein is GMP synthase [glutamine-hydrolyzing] of Helicobacter pylori (strain P12).